Consider the following 207-residue polypeptide: MASSGRYKVKFRRRREGKTDYYKRRIMVISGKPRLVVRFSNRYVLAQVIVSAPQGDFTVAEASSRELVKKFGWLGGTGNTPAAYLVGLLIGYRALSKGIKLAVLDVGLHRVTKGGRLFAVVKGAVDAGLEVPHDEEVQPSEDRLNGEHIAQYAADLKQSNPELYKIRFSKYLARGLEPENISKHIEEVKSKIMEKYAKSEAKAEDSQ.

The protein belongs to the universal ribosomal protein uL18 family. Part of the 50S ribosomal subunit. Contacts the 5S and 23S rRNAs.

Functionally, this is one of the proteins that bind and probably mediate the attachment of the 5S RNA into the large ribosomal subunit, where it forms part of the central protuberance. The protein is Large ribosomal subunit protein uL18 of Caldivirga maquilingensis (strain ATCC 700844 / DSM 13496 / JCM 10307 / IC-167).